The following is a 227-amino-acid chain: Ribosomal RNA small subunit methyltransferase G (227 aa).

S-adenosyl-L-methionine-binding positions include Gly-74, Leu-79, 124–125, and Arg-142; that span reads AE.

Belongs to the methyltransferase superfamily. RNA methyltransferase RsmG family.

The protein localises to the cytoplasm. Its function is as follows. Specifically methylates the N7 position of guanine in position 518 of 16S rRNA. This Mycolicibacterium vanbaalenii (strain DSM 7251 / JCM 13017 / BCRC 16820 / KCTC 9966 / NRRL B-24157 / PYR-1) (Mycobacterium vanbaalenii) protein is Ribosomal RNA small subunit methyltransferase G.